The primary structure comprises 248 residues: 23S rRNA (guanosine-2'-O-)-methyltransferase RlmB (248 aa).

The S-adenosyl-L-methionine site is built by Gly198, Leu218, and Leu227.

This sequence belongs to the class IV-like SAM-binding methyltransferase superfamily. RNA methyltransferase TrmH family. RlmB subfamily.

The protein localises to the cytoplasm. It catalyses the reaction guanosine(2251) in 23S rRNA + S-adenosyl-L-methionine = 2'-O-methylguanosine(2251) in 23S rRNA + S-adenosyl-L-homocysteine + H(+). Its function is as follows. Specifically methylates the ribose of guanosine 2251 in 23S rRNA. In Pseudomonas aeruginosa (strain ATCC 15692 / DSM 22644 / CIP 104116 / JCM 14847 / LMG 12228 / 1C / PRS 101 / PAO1), this protein is 23S rRNA (guanosine-2'-O-)-methyltransferase RlmB.